A 323-amino-acid chain; its full sequence is Transcription factor JunD (323 aa).

2 disordered regions span residues 138 to 173 and 197 to 221; these read QNQL…APGL and PFAA…QIVP. The span at 141–167 shows a compositional bias: gly residues; that stretch reads LGGGGGPNGGAAAAGGGGGGGGGGGGE. A compositionally biased stretch (pro residues) spans 198 to 212; the sequence is FAAPPPRLPPPPPPP. The interval 242–269 is basic motif; that stretch reads RIKAERKRLRNRIAASKCRKRKLERISR. Residues 242–305 form the bZIP domain; it reads RIKAERKRLR…AQLKQKVLSH (64 aa). The interval 270-298 is leucine-zipper; that stretch reads LEEKVKSLKSQNTELASTASLLREQVAQL.

It belongs to the bZIP family. Jun subfamily. In terms of assembly, binds DNA as a dimer.

The protein resides in the nucleus. The chain is Transcription factor JunD (JUND) from Gallus gallus (Chicken).